A 523-amino-acid polypeptide reads, in one-letter code: F-box only protein 31-B (523 aa).

The 47-residue stretch at 59-105 (PRSLLQLPPEILVEIFSSLPGTELPSLAQVCRKFRQILTTDTIWKRR) folds into the F-box domain. Residues C201, H209, C225, and H231 each coordinate Zn(2+). The tract at residues 372 to 427 (IQREQRQTGNEEDDGKGAGPDRAEHSQQPAPVHRPAKEDVNGVDNADDREQKPPNV) is disordered. 2 stretches are compositionally biased toward basic and acidic residues: residues 386–396 (GKGAGPDRAEH) and 406–423 (PAKE…REQK).

It belongs to the FBXO31 family. In terms of assembly, part of a SCF (SKP1-cullin-F-box) protein ligase complex SCF(FBXO31).

The protein resides in the cytoplasm. Its pathway is protein modification; protein ubiquitination. Substrate-recognition component of the SCF(FBXO31) protein ligase complex, which specifically mediates the ubiquitination of proteins amidated at their C-terminus in response to oxidative stress, leading to their degradation by the proteasome. Fbxo31 specifically recognizes and binds C-terminal peptides bearing an amide: C-terminal amidation in response to oxidative stress takes place following protein fragmentation. The SCF(FBXO31) also plays a role in G1 arrest following DNA damage by mediating ubiquitination of phosphorylated cyclin-D1 (ccnd1), promoting its degradation by the proteasome, resulting in G1 arrest. The SCF(FBXO31) complex is however not a major regulator of ccnd1 stability during the G1/S transition. This Xenopus laevis (African clawed frog) protein is F-box only protein 31-B (fbxo31-b).